The following is a 95-amino-acid chain: Enhancer of yellow 2b transcription factor (95 aa).

It belongs to the ENY2 family. As to expression, expressed specifically in testis.

In terms of biological role, testis-specific paralog of the ubiquitously expressed transcription and mRNA export factor e(y)2. Cannot functionally replace e(y)2. The sequence is that of Enhancer of yellow 2b transcription factor (e(y)2b) from Drosophila melanogaster (Fruit fly).